We begin with the raw amino-acid sequence, 488 residues long: Calcium uniporter protein, mitochondrial (488 aa).

The transit peptide at 1–74 (MRALVSRTPI…RSFQLSASSR (74 aa)) directs the protein to the mitochondrion. The interval 65–117 (RSFQLSASSRDKRGPQSAEPDPLERLEVKKVQQQHENEKDDSGRDTKSGGKVA) is disordered. Residues 75-339 (DKRGPQSAEP…ECDALAHRGA (265 aa)) are Mitochondrial matrix-facing. Over residues 86–112 (PLERLEVKKVQQQHENEKDDSGRDTKS) the composition is skewed to basic and acidic residues. Residues 340–361 (QRVALGGFGILAFWWYIVYKLT) traverse the membrane as a helical segment. At 362–370 (FETDLGWDT) the chain is on the mitochondrial intermembrane side. Residues 368-376 (WDTMEPVTY) carry the Selectivity filter motif. The chain crosses the membrane as a helical span at residues 371 to 391 (MEPVTYLVSLSTLMGGYLWFL). E372 serves as a coordination point for Ca(2+). The Mitochondrial matrix portion of the chain corresponds to 392-488 (YHNREISYRS…ERPKDDRDDD (97 aa)). The interval 464–488 (ALKKERRLKNGSQKEERPKDDRDDD) is disordered. A compositionally biased stretch (basic and acidic residues) spans 475-488 (SQKEERPKDDRDDD).

It belongs to the MCU (TC 1.A.77) family. As to quaternary structure, homotetramer, assembles in a dimer or dimers configuration with two interfaces.

It is found in the mitochondrion inner membrane. It catalyses the reaction Ca(2+)(in) = Ca(2+)(out). Its activity is regulated as follows. Inhibited by ruthenium red or its derivative Ru360. Its function is as follows. Highly selective calcium channel localized to the inner mitochondrial membrane, which mediates calcium uptake into the mitochondrial matrix. Mitochondrial calcium homeostasis plays key roles in cellular physiology and regulates ATP production, cytoplasmic calcium signals and activation of cell death pathways. Sufficient to operate as a pore-forming channel without the need of calcium-sensor or auxiliary subunit. The chain is Calcium uniporter protein, mitochondrial from Neosartorya fischeri (strain ATCC 1020 / DSM 3700 / CBS 544.65 / FGSC A1164 / JCM 1740 / NRRL 181 / WB 181) (Aspergillus fischerianus).